Here is a 305-residue protein sequence, read N- to C-terminus: MTKTRCMHEHFRKIVQRVKKTLRLSASDKSHGVAELDDLPEECVSIIVSFTSPQDACVLASVSKTFASAVKSDIVWEKFIPPEYESLISQSRAFKFLSKKELYFALCDKSVLIDDGKKSLWIEKANAKRCIMISAMNLAIAWGNSPQSWRWIPDPQARFETVAELLEVCLFEIRGRINSRVISPKTRYSAYIVYKKLNICYGFENVAVEVVVGVVGQDLEESCRRYICFDETMDEQFRRRDRGKNLVKPERRKDGWMEIKIGEFFNEGGLLNDDEIEMVALEAKQRHWKRGLIIQGIEIRPTNIR.

One can recognise an F-box domain in the interval 33-79; the sequence is VAELDDLPEECVSIIVSFTSPQDACVLASVSKTFASAVKSDIVWEKF.

The sequence is that of Putative F-box protein PP2-B8 (PP2B8) from Arabidopsis thaliana (Mouse-ear cress).